Here is a 322-residue protein sequence, read N- to C-terminus: Transaldolase (322 aa).

The active-site Schiff-base intermediate with substrate is Lys-132. Phosphoserine is present on residues Ser-268 and Ser-269.

It belongs to the transaldolase family. Type 1 subfamily. In terms of assembly, homodimer.

The catalysed reaction is D-sedoheptulose 7-phosphate + D-glyceraldehyde 3-phosphate = D-erythrose 4-phosphate + beta-D-fructose 6-phosphate. The protein operates within carbohydrate degradation; pentose phosphate pathway; D-glyceraldehyde 3-phosphate and beta-D-fructose 6-phosphate from D-ribose 5-phosphate and D-xylulose 5-phosphate (non-oxidative stage): step 2/3. Functionally, transaldolase is important for the balance of metabolites in the pentose-phosphate pathway. This chain is Transaldolase (tal1), found in Schizosaccharomyces pombe (strain 972 / ATCC 24843) (Fission yeast).